The chain runs to 184 residues: Large ribosomal subunit protein uL6 (184 aa).

The protein belongs to the universal ribosomal protein uL6 family. As to quaternary structure, part of the 50S ribosomal subunit.

Functionally, this protein binds to the 23S rRNA, and is important in its secondary structure. It is located near the subunit interface in the base of the L7/L12 stalk, and near the tRNA binding site of the peptidyltransferase center. The protein is Large ribosomal subunit protein uL6 of Thermotoga petrophila (strain ATCC BAA-488 / DSM 13995 / JCM 10881 / RKU-1).